The primary structure comprises 127 residues: Fumarate reductase subunit C (127 aa).

3 helical membrane-spanning segments follow: residues 30–50 (ATVL…GSLV), 67–87 (IVVA…QTFF), and 107–127 (VVVL…LVIV).

Belongs to the FrdC family. As to quaternary structure, part of an enzyme complex containing four subunits: a flavoprotein (FrdA), an iron-sulfur protein (FrdB), and two hydrophobic anchor proteins (FrdC and FrdD).

The protein localises to the cell inner membrane. Its function is as follows. Anchors the catalytic components of the fumarate reductase complex to the cell membrane, binds quinones. The chain is Fumarate reductase subunit C from Aliivibrio fischeri (strain ATCC 700601 / ES114) (Vibrio fischeri).